We begin with the raw amino-acid sequence, 429 residues long: UDP-N-acetylglucosamine 1-carboxyvinyltransferase (429 aa).

22-23 (KN) contributes to the phosphoenolpyruvate binding site. R96 is a binding site for UDP-N-acetyl-alpha-D-glucosamine. Catalysis depends on C120, which acts as the Proton donor. C120 bears the 2-(S-cysteinyl)pyruvic acid O-phosphothioketal mark. UDP-N-acetyl-alpha-D-glucosamine-binding positions include 125–129 (RPVDL), D310, and I332.

It belongs to the EPSP synthase family. MurA subfamily.

It is found in the cytoplasm. It catalyses the reaction phosphoenolpyruvate + UDP-N-acetyl-alpha-D-glucosamine = UDP-N-acetyl-3-O-(1-carboxyvinyl)-alpha-D-glucosamine + phosphate. The protein operates within cell wall biogenesis; peptidoglycan biosynthesis. Its function is as follows. Cell wall formation. Adds enolpyruvyl to UDP-N-acetylglucosamine. This chain is UDP-N-acetylglucosamine 1-carboxyvinyltransferase, found in Caulobacter vibrioides (strain ATCC 19089 / CIP 103742 / CB 15) (Caulobacter crescentus).